Consider the following 787-residue polypeptide: MKTEVTENIFEQAWDGFKGTNWRDKASVTRFVQENYKPYDGDESFLAGPTERTLKVKKIIEDTKNHYEEVGFPFDTDRVTSIDKIPAGYIDANDKELELIYGMQNSELFRLNFMPRGGLRVAEKILTEHGLSVDPGLHDVLSQTMTSVNDGIFRAYTSAIRKARHAHTVTGLPDAYSRGRIIGVYARLALYGADYLMKEKAKEWDAITEINEENIRLKEEINMQYQALQEVVNFGALYGLDVSRPAMNVKEAIQWVNIAYMAVCRVINGAATSLGRVPIVLDIFAERDLARGTFTEQEIQEFVDDFVLKLRTMKFARAAAYDELYSGDPTFITTSMAGMGNDGRHRVTKMDYRFLNTLDTIGNAPEPNLTVLWDSKLPYSFKRYSMSMSHKHSSIQYEGVETMAKDGYGEMSCISCCVSPLDPENEEGRHNLQYFGARVNVLKAMLTGLNGGYDDVHKDYKVFDIEPVRDEILDYDTVMENFDKSLDWLTDTYVDAMNIIHYMTDKYNYEAVQMAFLPTKVRANMGFGICGFANTVDSLSAIKYAKVKTLRDENGYIYDYEVEGDFPRYGEDDDRADDIAKLVMKMYHEKLASHKLYKNAEATVSLLTITSNVAYSKQTGNSPVHKGVFLNEDGTVNKSKLEFFSPGANPSNKAKGGWLQNLRSLAKLEFKDANDGISLTTQVSPRALGKTRDEQVDNLVQILDGYFTPGALINGTEFAGQHVNLNVMDLKDVYDKIMRGEDVIVRISGYCVNTKYLTPEQKQELTERVFHEVLSNDDEEVMHTSNI.

The region spanning 8-629 (NIFEQAWDGF…GNSPVHKGVF (622 aa)) is the PFL domain. The active-site S-acetylcysteine intermediate is C416. Residue C417 is the Cysteine radical intermediate of the active site. The Glycine radical domain occupies 645–774 (SPGANPSNKA…LTERVFHEVL (130 aa)). A Glycine radical modification is found at G749.

It belongs to the glycyl radical enzyme (GRE) family. PFL subfamily. As to quaternary structure, homodimer.

The protein localises to the cytoplasm. The enzyme catalyses formate + acetyl-CoA = pyruvate + CoA. It participates in fermentation; pyruvate fermentation; formate from pyruvate: step 1/1. This chain is Formate acetyltransferase (pfl), found in Lactococcus lactis subsp. lactis (strain IL1403) (Streptococcus lactis).